The chain runs to 370 residues: Psilocybin cluster transcription regulator (370 aa).

Disordered stretches follow at residues 1–39 (MAPTTPATHDPALSHGAPPTQGSQAPANAAPNLTPADIS) and 102–221 (YQTG…RRRR). A compositionally biased stretch (polar residues) spans 143 to 152 (IQHQDQQQSG). Residues 183-202 (TSTSTPSGGRRGGRSATMGS) are compositionally biased toward low complexity. A compositionally biased stretch (basic and acidic residues) spans 204–218 (EWSRQRKDNHKEVER). Residues 208–221 (QRKDNHKEVERRRR) form a basic motif region. One can recognise a bHLH domain in the interval 208–258 (QRKDNHKEVERRRRGNINEGINELGRIVPSGSGEKAKGAILSRAVQYIHHL). A helix-loop-helix motif region spans residues 222–258 (GNINEGINELGRIVPSGSGEKAKGAILSRAVQYIHHL). The disordered stretch occupies residues 317–370 (VSTAGAGSGAAKDESAAGTKRRSTDGADAAGTNVEGGNNDNAEGERDGKRQRTE). The span at 359 to 370 (EGERDGKRQRTE) shows a compositional bias: basic and acidic residues.

Its subcellular location is the nucleus. Functionally, transcription factor that may regulate the expression of the gene cluster that mediates the biosynthesis of psilocybin, a psychotropic tryptamine-derived natural product. This Psilocybe cyanescens protein is Psilocybin cluster transcription regulator.